The sequence spans 167 residues: UPF0179 protein PAE0681 (167 aa).

The segment at 142–167 is disordered; the sequence is PSPSGSSISATSQGPSRAPPSRRLLK. Residues 145 to 157 show a composition bias toward low complexity; it reads SGSSISATSQGPS.

This sequence belongs to the UPF0179 family.

The protein is UPF0179 protein PAE0681 of Pyrobaculum aerophilum (strain ATCC 51768 / DSM 7523 / JCM 9630 / CIP 104966 / NBRC 100827 / IM2).